Reading from the N-terminus, the 212-residue chain is Uracil phosphoribosyltransferase (212 aa).

5-phospho-alpha-D-ribose 1-diphosphate is bound by residues Arg-78, Arg-103, and Asp-130–Ser-138. Uracil is bound by residues Ile-193 and Gly-198–Ala-200. Asp-199 is a 5-phospho-alpha-D-ribose 1-diphosphate binding site.

It belongs to the UPRTase family. It depends on Mg(2+) as a cofactor.

The enzyme catalyses UMP + diphosphate = 5-phospho-alpha-D-ribose 1-diphosphate + uracil. Its pathway is pyrimidine metabolism; UMP biosynthesis via salvage pathway; UMP from uracil: step 1/1. Allosterically activated by GTP. Catalyzes the conversion of uracil and 5-phospho-alpha-D-ribose 1-diphosphate (PRPP) to UMP and diphosphate. The sequence is that of Uracil phosphoribosyltransferase from Pseudomonas aeruginosa (strain LESB58).